The primary structure comprises 465 residues: Sushi repeat-containing protein SRPX2 (465 aa).

Residues 1–23 (MAIQLTRRGALSLLLFLTPAVMP) form the signal peptide. 3 Sushi domains span residues 69–119 (ATCY…YCRQ), 120–178 (MRCH…VCVD), and 262–321 (RRCP…VCVP). Intrachain disulfides connect C71-C105, C91-C117, C122-C163, and C149-C176. In terms of domain architecture, HYR spans 177-261 (VDIDPPKIRC…SCKFIVKVQV (85 aa)). Cystine bridges form between C264-C306 and C292-C319.

In terms of assembly, forms homooligomers. Interacts with PLAUR (via the UPAR/Ly6 domains), ADAMTS4 and CTSB. Interacts with HGF; the interaction increases the mitogenic activity of HGF. In terms of processing, contains chondroitin sulfate chains.

The protein resides in the secreted. It is found in the cytoplasm. Its subcellular location is the cell surface. The protein localises to the synapse. Functionally, acts as a ligand for the urokinase plasminogen activator surface receptor. Plays a role in angiogenesis by inducing endothelial cell migration and the formation of vascular network (cords). Involved in cellular migration and adhesion. Increases the phosphorylation levels of FAK. Interacts with and increases the mitogenic activity of HGF. Promotes synapse formation. In Bos taurus (Bovine), this protein is Sushi repeat-containing protein SRPX2 (SRPX2).